A 439-amino-acid polypeptide reads, in one-letter code: Hemagglutinin-esterase (439 aa).

The N-terminal stretch at 1–22 is a signal peptide; it reads MGSTCIAMAPRTLLLLIGCQLV. Residues 12-132 are esterase domain 1; the sequence is TLLLLIGCQL…DNKRWMGNKA (121 aa). At 23–407 the chain is on the virion surface side; the sequence is FGFNEPLNIV…PVCIYDPLPV (385 aa). Ser45 serves as the catalytic Nucleophile. Residues Cys49 and Cys70 are joined by a disulfide bond. N-linked (GlcNAc...) asparagine; by host glycosylation is present at Asn94. A disulfide bridge connects residues Cys118 and Cys167. The segment at 133 to 281 is receptor binding; the sequence is RFYARVYEKM…GNYKAVSLEY (149 aa). Residues Asn196, Asn246, Asn309, and Asn316 are each glycosylated (N-linked (GlcNAc...) asparagine; by host). Disulfide bonds link Cys202–Cys291 and Cys210–Cys264. The segment at 282 to 395 is esterase domain 2; the sequence is LLSLPSKAIC…QCPTAANIGY (114 aa). Cys322 and Cys327 are oxidised to a cystine. Asn331 is a glycosylation site (N-linked (GlcNAc...) asparagine; by host). Residues Asp342 and His345 each act as charge relay system in the active site. Asn360 and Asn374 each carry an N-linked (GlcNAc...) asparagine; by host glycan. The cysteines at positions 363 and 387 are disulfide-linked. A helical membrane pass occupies residues 408–428; it reads VLLGVLLGIAVLIIVFLILYF. At 429 to 439 the chain is on the intravirion side; sequence MTDSGVRLHEA.

This sequence belongs to the influenza type C/coronaviruses hemagglutinin-esterase family. In terms of assembly, homodimer; disulfide-linked. Forms a complex with the M protein in the pre-Golgi. Associates then with S-M complex to form a ternary complex S-M-HE. In terms of processing, N-glycosylated in the host RER.

The protein localises to the virion membrane. It is found in the host cell membrane. It carries out the reaction N-acetyl-9-O-acetylneuraminate + H2O = N-acetylneuraminate + acetate + H(+). It catalyses the reaction N-acetyl-4-O-acetylneuraminate + H2O = N-acetylneuraminate + acetate + H(+). Its function is as follows. Structural protein that makes short spikes at the surface of the virus. Contains receptor binding and receptor-destroying activities. Mediates de-O-acetylation of N-acetyl-4-O-acetylneuraminic acid, which is probably the receptor determinant recognized by the virus on the surface of erythrocytes and susceptible cells. This receptor-destroying activity is important for virus release as it probably helps preventing self-aggregation and ensures the efficient spread of the progeny virus from cell to cell. May serve as a secondary viral attachment protein for initiating infection, the spike protein being the major one. May become a target for both the humoral and the cellular branches of the immune system. The sequence is that of Hemagglutinin-esterase from Murine coronavirus (strain JHM) (MHV-JHM).